Reading from the N-terminus, the 1382-residue chain is Hepatocyte growth factor receptor (1382 aa).

A signal peptide spans Met1–Gly24. The Extracellular portion of the chain corresponds to Glu25–Leu935. Residues Glu27–Leu516 form the Sema domain. A glycan (N-linked (GlcNAc...) asparagine) is linked at Asn45. 4 disulfides stabilise this stretch: Cys95/Cys101, Cys98/Cys160, Cys133/Cys141, and Cys173/Cys176. Asn106 is a glycosylation site (N-linked (GlcNAc...) asparagine). N-linked (GlcNAc...) asparagine glycans are attached at residues Asn203 and Asn359. 2 disulfides stabilise this stretch: Cys299-Cys364 and Cys386-Cys398. Asn400, Asn406, and Asn450 each carry an N-linked (GlcNAc...) asparagine glycan. 4 disulfides stabilise this stretch: Cys521-Cys539, Cys527-Cys562, Cys530-Cys546, and Cys542-Cys552. 3 consecutive IPT/TIG domains span residues Pro564–Val656, Pro658–Gln740, and Pro743–Val837. A glycan (O-linked (Man) threonine) is linked at Thr583. N-linked (GlcNAc...) asparagine glycosylation is found at Asn608 and Asn636. Thr677 carries O-linked (Man) threonine glycosylation. An N-linked (GlcNAc...) asparagine glycan is attached at Asn751. Thr762 carries O-linked (Man) threonine glycosylation. N-linked (GlcNAc...) asparagine glycosylation is found at Asn786, Asn880, and Asn931. A helical membrane pass occupies residues Ile936 to Leu956. Topologically, residues Lys957 to Thr1382 are cytoplasmic. Ser967 carries the post-translational modification Phosphoserine. Residue Thr978 is modified to Phosphothreonine. 3 positions are modified to phosphoserine: Ser991, Ser998, and Ser1001. Position 1004 is a phosphotyrosine (Tyr1004). A Protein kinase domain is found at Val1079–Ile1346. ATP-binding positions include Ile1085–Val1093 and Lys1111. Asp1205 (proton acceptor) is an active-site residue. Residues Leu1213 to Thr1382 form an interaction with RANBP9 region. The residue at position 1231 (Tyr1231) is a Phosphotyrosine. Residues Tyr1235 and Tyr1236 each carry the phosphotyrosine; by autocatalysis modification. Thr1290 is modified (phosphothreonine). An interaction with MUC20 region spans residues Trp1321 to Val1360. A phosphotyrosine; by autocatalysis mark is found at Tyr1350 and Tyr1357. Tyr1366 is modified (phosphotyrosine).

This sequence belongs to the protein kinase superfamily. Tyr protein kinase family. As to quaternary structure, heterodimer made of an alpha chain (50 kDa) and a beta chain (145 kDa) which are disulfide linked. Binds PLXNB1. Interacts when phosphorylated with downstream effectors including STAT3, PIK3R1, SRC, PCLG1, GRB2 and GAB1. Interacts with SPSB1, SPSB2 and SPSB4. Interacts with INPP5D/SHIP1. When phosphorylated at Tyr-1357, interacts with INPPL1/SHIP2. Interacts with RANBP9 and RANBP10, as well as SPSB1, SPSB2, SPSB3 and SPSB4. SPSB1 binding occurs in the presence and in the absence of HGF, however HGF treatment has a positive effect on this interaction. Interacts with MUC20; prevents interaction with GRB2 and suppresses hepatocyte growth factor-induced cell proliferation. Interacts with GRB10. Interacts with PTPN1 and PTPN2. Interacts with HSP90AA1 and HSP90AB1; the interaction suppresses MET kinase activity. Interacts with tensin TNS3. Interacts (when phosphorylated) with tensin TNS4 (via SH2 domain); the interaction increases MET protein stability by inhibiting MET endocytosis and subsequent lysosomal degradation. Autophosphorylated in response to ligand binding on Tyr-1235 and Tyr-1236 in the kinase domain leading to further phosphorylation of Tyr-1350 and Tyr-1357 in the C-terminal multifunctional docking site. Dephosphorylated by PTPRJ at Tyr-1350 and Tyr-1366. Dephosphorylated by PTPN1 and PTPN2. Post-translationally, ubiquitinated. Ubiquitination by CBL regulates the receptor stability and activity through proteasomal degradation. In terms of processing, O-mannosylation of IPT/TIG domains by TMEM260 is required for protein maturation. O-mannosylated residues are composed of single mannose glycans that are not elongated or modified.

Its subcellular location is the membrane. It catalyses the reaction L-tyrosyl-[protein] + ATP = O-phospho-L-tyrosyl-[protein] + ADP + H(+). Its activity is regulated as follows. In its inactive state, the C-terminal tail interacts with the catalytic domain and inhibits the kinase activity. Upon ligand binding, the C-terminal tail is displaced and becomes phosphorylated, thus increasing the kinase activity. Receptor tyrosine kinase that transduces signals from the extracellular matrix into the cytoplasm by binding to hepatocyte growth factor/HGF ligand. Regulates many physiological processes including proliferation, scattering, morphogenesis and survival. Ligand binding at the cell surface induces autophosphorylation of MET on its intracellular domain that provides docking sites for downstream signaling molecules. Following activation by ligand, interacts with the PI3-kinase subunit PIK3R1, PLCG1, SRC, GRB2, STAT3 or the adapter GAB1. Recruitment of these downstream effectors by MET leads to the activation of several signaling cascades including the RAS-ERK, PI3 kinase-AKT, or PLCgamma-PKC. The RAS-ERK activation is associated with the morphogenetic effects while PI3K/AKT coordinates prosurvival effects. During embryonic development, MET signaling plays a role in gastrulation, development and migration of muscles and neuronal precursors, angiogenesis and kidney formation. In adults, participates in wound healing as well as organ regeneration and tissue remodeling. Also promotes differentiation and proliferation of hematopoietic cells. This chain is Hepatocyte growth factor receptor (MET), found in Loxodonta africana (African elephant).